The primary structure comprises 430 residues: Glutamate-1-semialdehyde 2,1-aminomutase (430 aa).

An N6-(pyridoxal phosphate)lysine modification is found at lysine 265.

The protein belongs to the class-III pyridoxal-phosphate-dependent aminotransferase family. HemL subfamily. Homodimer. Pyridoxal 5'-phosphate serves as cofactor.

The protein resides in the cytoplasm. The catalysed reaction is (S)-4-amino-5-oxopentanoate = 5-aminolevulinate. It functions in the pathway porphyrin-containing compound metabolism; protoporphyrin-IX biosynthesis; 5-aminolevulinate from L-glutamyl-tRNA(Glu): step 2/2. This is Glutamate-1-semialdehyde 2,1-aminomutase from Shewanella sp. (strain ANA-3).